An 86-amino-acid chain; its full sequence is Alpha-mammal toxin Ts3 (86 aa).

An N-terminal signal peptide occupies residues 1 to 19 (MNYFILLVVVCLLTAGTEG). Residues 21–82 (KDGYPVEYDN…EPTKTNGKCK (62 aa)) form the LCN-type CS-alpha/beta domain. Intrachain disulfides connect Cys31–Cys81, Cys35–Cys57, Cys43–Cys64, and Cys47–Cys66. At Ser83 the chain carries Serine amide.

As to expression, expressed by the venom gland.

The protein resides in the secreted. Alpha toxins bind voltage-independently at site-3 of sodium channels (Nav) and inhibit the inactivation of the activated channels, thereby blocking neuronal transmission. This synthetic toxin inhibits inactivation of rat Nav1.4/SCN4A (when tested at 201 nM). In addition, it has been shown to cause a persistent sodium channel activation in nitrergic inhibitory fibers innervating the rabbit corpus cavernosum, resulting in NO release and cavernosal smooth muscle relaxation. This toxin is active against mammals. Functionally, this synthetic peptide with a Ser at position 31 (C12S) acts as a bradykinin-potentiating peptide (BPP). Induces endothelium-dependent vasodilation that is reverted by NO synthase inhibitor, suggesting it activates molecular targets on vascular endothelium leading to NO production and vasodilation. It appears to induce vasodilation through muscarinic acetylcholine receptors (AChR) M2 (CHRM2) and M3 (CHRM3). Does not inhibit the angiotensin-converting enzyme (ACE). Does not act via bradykinin B2 receptor. This is Alpha-mammal toxin Ts3 from Tityus serrulatus (Brazilian scorpion).